A 506-amino-acid chain; its full sequence is Glutamate--tRNA ligase (506 aa).

Positions 21–31 (PSPTGTPHVGM) match the 'HIGH' region motif. The 'KMSKS' region signature appears at 265-269 (KLSKR). Residue lysine 268 participates in ATP binding.

It belongs to the class-I aminoacyl-tRNA synthetase family. Glutamate--tRNA ligase type 1 subfamily. In terms of assembly, monomer.

It is found in the cytoplasm. It carries out the reaction tRNA(Glu) + L-glutamate + ATP = L-glutamyl-tRNA(Glu) + AMP + diphosphate. In terms of biological role, catalyzes the attachment of glutamate to tRNA(Glu) in a two-step reaction: glutamate is first activated by ATP to form Glu-AMP and then transferred to the acceptor end of tRNA(Glu). The protein is Glutamate--tRNA ligase of Bifidobacterium longum (strain DJO10A).